A 177-amino-acid polypeptide reads, in one-letter code: Alkyl hydroperoxide reductase AhpD (177 aa).

Cysteine 130 acts as the Proton donor in catalysis. Cysteine 130 and cysteine 133 form a disulfide bridge. The Cysteine sulfenic acid (-SOH) intermediate role is filled by cysteine 133.

The protein belongs to the AhpD family. In terms of assembly, homotrimer.

It carries out the reaction N(6)-[(R)-dihydrolipoyl]-L-lysyl-[lipoyl-carrier protein] + a hydroperoxide = N(6)-[(R)-lipoyl]-L-lysyl-[lipoyl-carrier protein] + an alcohol + H2O. Antioxidant protein with alkyl hydroperoxidase activity. Required for the reduction of the AhpC active site cysteine residues and for the regeneration of the AhpC enzyme activity. The chain is Alkyl hydroperoxide reductase AhpD from Mycobacterium bovis (strain ATCC BAA-935 / AF2122/97).